Consider the following 612-residue polypeptide: Zinc metalloproteinase-disintegrin-like berythractivase (612 aa).

Residues 1–20 (MIQVLLVIICLEAFPYQGSS) form the signal peptide. The propeptide occupies 21 to 187 (IILESGNVND…EPIKKASLLN (167 aa)). The 197-residue stretch at 200–396 (KYVEFVVVLD…NRPQCLLNKP (197 aa)) folds into the Peptidase M12B domain. A Ca(2+)-binding site is contributed by Glu203. The N-linked (GlcNAc...) asparagine glycan is linked to Asn260. Asp287 contacts Ca(2+). Intrachain disulfides connect Cys311/Cys391, Cys351/Cys375, and Cys353/Cys358. His336 contributes to the Zn(2+) binding site. Glu337 is an active-site residue. Residues His340 and His346 each coordinate Zn(2+). Asn348 carries an N-linked (GlcNAc...) asparagine glycan. The N-linked (GlcNAc...) asparagine glycan is linked to Asn374. Ca(2+) is bound by residues Cys391, Asn394, Val406, Asn409, Leu411, Glu413, Glu416, and Asp419. The Disintegrin domain maps to 404-490 (PPVCGNELLE…DCPMDDFQRN (87 aa)). Disulfide bonds link Cys407–Cys436, Cys418–Cys431, Cys420–Cys426, Cys430–Cys453, Cys444–Cys450, Cys449–Cys475, Cys462–Cys482, Cys469–Cys501, Cys494–Cys506, Cys513–Cys563, Cys528–Cys574, Cys541–Cys551, Cys558–Cys600, and Cys594–Cys605. The N-linked (GlcNAc...) asparagine glycan is linked to Asn432. A D/ECD-tripeptide motif is present at residues 468–470 (DCD). Ca(2+) contacts are provided by Asp470, Leu471, Glu473, and Asp485.

This sequence belongs to the venom metalloproteinase (M12B) family. P-III subfamily. P-IIIa sub-subfamily. In terms of assembly, monomer. Zn(2+) serves as cofactor. Highly glycosylated. Expressed by the venom gland.

Its subcellular location is the secreted. With respect to regulation, inhibited by EDTA and o-phenanthroline. Not inhibited by PMSF, benzamidine, irreversible serine-proteinase inhibitors and cysteine proteinase inhibitor E-64. Potent activator of prothrombin (F2). Does not elicit any hemorrhagic response. Barely inhibits collagen-induced platelet aggregation. Binds neither collagen, nor the jararhagin monoclonal antibody MAJar3. Hydrolyzes the Aalpha-chain of fibrin and fibrinogen, without affecting the Bbeta- and gamma-chains. Is capable of triggering endothelial pro-inflammatory and procoagulant cell responses, but fails to trigger apoptosis. Induces von Willebrand factor release, and the expression of both ICAM1 and E-selectin (SELE) (without increase in VCAM1) in endothelial cells (HUVEC). Is also able to up-regulate the synthesis of the coagulation factor TF (F3). Enhances nitric oxide (NO) generation, prostacyclin production and interleukin-8 release. This chain is Zinc metalloproteinase-disintegrin-like berythractivase, found in Bothrops erythromelas (Caatinga lance head).